The chain runs to 440 residues: Chromosome partition protein MukF (440 aa).

The leucine-zipper stretch occupies residues 208-236; the sequence is LSETSGTLRELQDTLEAAGDKLQANLLRI.

It belongs to the MukF family. Interacts, and probably forms a ternary complex, with MukE and MukB via its C-terminal region. The complex formation is stimulated by calcium or magnesium. It is required for an interaction between MukE and MukB.

It is found in the cytoplasm. The protein resides in the nucleoid. Its function is as follows. Involved in chromosome condensation, segregation and cell cycle progression. May participate in facilitating chromosome segregation by condensation DNA from both sides of a centrally located replisome during cell division. Not required for mini-F plasmid partitioning. Probably acts via its interaction with MukB and MukE. Overexpression results in anucleate cells. It has a calcium binding activity. The sequence is that of Chromosome partition protein MukF from Shigella boydii serotype 18 (strain CDC 3083-94 / BS512).